A 350-amino-acid chain; its full sequence is MGAGASAEEKHSRELEKKLKEDADKDARTVKLLLLGAGESGKSTIVKQMKIIHQDGYSVEECLEFIAIIYGNTLQSMIAIVKAMNTLNIQFGDPARQDDARKLMHLADTIDEGSMPKEMSDIIGRLWKDTGIQACFDRASEYQLNDSAGYYLNDLDRLVIPGYVPTEQDVLRSRVKTTGIIETQFGLKDLNFRMFDVGGQRSERKKWIHCFEGVTCIIFIAALSAYDMVLVEDDEVNRMHESLHLFNSICNHRYFATTSIVLFLNKKDVFTEKIKKAHLSICFPDYDGPNTYEDAGNYIKTQFLELNMRRDVKEIYSHMTCATDTENVKFVFDAVTDIIIKENLKDCGLF.

Residues 1–21 form a disordered region; it reads MGAGASAEEKHSRELEKKLKE. Gly2 is lipidated: N-myristoyl glycine. A compositionally biased stretch (basic and acidic residues) spans 7–21; the sequence is AEEKHSRELEKKLKE. Positions 28–350 constitute a G-alpha domain; sequence RTVKLLLLGA…KENLKDCGLF (323 aa). A G1 motif region spans residues 31–44; that stretch reads KLLLLGAGESGKST. GTP is bound by residues 36–43, 171–177, 196–200, 265–268, and Ala322; these read GAGESGKS, LRSRVKT, DVGGQ, and NKKD. Mg(2+)-binding residues include Ser43 and Thr177. The interval 169–177 is G2 motif; sequence DVLRSRVKT. The segment at 192 to 201 is G3 motif; it reads FRMFDVGGQR. A G4 motif region spans residues 261-268; sequence VLFLNKKD. Residues 320 to 325 form a G5 motif region; sequence TCATDT.

It belongs to the G-alpha family. G(i/o/t/z) subfamily. G proteins are composed of 3 units; alpha, beta and gamma. The alpha chain contains the guanine nucleotide binding site.

Its function is as follows. Guanine nucleotide-binding proteins (G proteins) are involved as modulators or transducers in various transmembrane signaling systems. Transducin is an amplifier and one of the transducers of a visual impulse that performs the coupling between rhodopsin and cGMP-phosphodiesterase. In Xenopus laevis (African clawed frog), this protein is Guanine nucleotide-binding protein G(t) subunit alpha (gnat).